Here is a 240-residue protein sequence, read N- to C-terminus: Small ribosomal subunit protein uS3 (240 aa).

The 69-residue stretch at 39 to 107 (IREFIKEECK…ELHLNIVEVR (69 aa)) folds into the KH type-2 domain. The span at 212–222 (PQARDRRHAEL) shows a compositional bias: basic and acidic residues. The disordered stretch occupies residues 212–240 (PQARDRRHAELQEGGGPRPQGGGRPRRDR). The segment covering 224–234 (EGGGPRPQGGG) has biased composition (gly residues).

This sequence belongs to the universal ribosomal protein uS3 family. As to quaternary structure, part of the 30S ribosomal subunit. Forms a tight complex with proteins S10 and S14.

Its function is as follows. Binds the lower part of the 30S subunit head. Binds mRNA in the 70S ribosome, positioning it for translation. In Dinoroseobacter shibae (strain DSM 16493 / NCIMB 14021 / DFL 12), this protein is Small ribosomal subunit protein uS3.